A 353-amino-acid polypeptide reads, in one-letter code: DNA integrity scanning protein DisA (353 aa).

One can recognise a DAC domain in the interval 6 to 144 (DKELMNILKI…GGIKYVLRDS (139 aa)). ATP-binding positions include Gly-73, Leu-91, and 104–108 (TRHRT).

This sequence belongs to the DisA family. As to quaternary structure, homooctamer. Requires Mg(2+) as cofactor.

It carries out the reaction 2 ATP = 3',3'-c-di-AMP + 2 diphosphate. Its function is as follows. Participates in a DNA-damage check-point that is active prior to asymmetric division when DNA is damaged. DisA forms globular foci that rapidly scan along the chromosomes during sporulation, searching for lesions. When a lesion is present, DisA pauses at the lesion site. This triggers a cellular response that culminates in a temporary block in sporulation initiation. In terms of biological role, also has diadenylate cyclase activity, catalyzing the condensation of 2 ATP molecules into cyclic di-AMP (c-di-AMP). c-di-AMP acts as a signaling molecule that couples DNA integrity with progression of sporulation. The rise in c-di-AMP level generated by DisA while scanning the chromosome, operates as a positive signal that advances sporulation; upon encountering a lesion, the DisA focus arrests at the damaged site and halts c-di-AMP synthesis. The sequence is that of DNA integrity scanning protein DisA from Clostridium botulinum (strain Kyoto / Type A2).